Here is a 248-residue protein sequence, read N- to C-terminus: Deoxyribose-phosphate aldolase (248 aa).

D117 (proton donor/acceptor) is an active-site residue. The Schiff-base intermediate with acetaldehyde role is filled by K179. K208 serves as the catalytic Proton donor/acceptor.

This sequence belongs to the DeoC/FbaB aldolase family. DeoC type 1 subfamily.

It is found in the cytoplasm. The catalysed reaction is 2-deoxy-D-ribose 5-phosphate = D-glyceraldehyde 3-phosphate + acetaldehyde. Its pathway is carbohydrate degradation; 2-deoxy-D-ribose 1-phosphate degradation; D-glyceraldehyde 3-phosphate and acetaldehyde from 2-deoxy-alpha-D-ribose 1-phosphate: step 2/2. Its function is as follows. Catalyzes a reversible aldol reaction between acetaldehyde and D-glyceraldehyde 3-phosphate to generate 2-deoxy-D-ribose 5-phosphate. This Thermotoga sp. (strain RQ2) protein is Deoxyribose-phosphate aldolase.